The following is a 519-amino-acid chain: Probable cytochrome P450 6g2 (519 aa).

Residue C460 coordinates heme.

The protein belongs to the cytochrome P450 family. Requires heme as cofactor.

It localises to the endoplasmic reticulum membrane. It is found in the microsome membrane. Functionally, may be involved in the metabolism of insect hormones and in the breakdown of synthetic insecticides. The polypeptide is Probable cytochrome P450 6g2 (Cyp6g2) (Drosophila melanogaster (Fruit fly)).